We begin with the raw amino-acid sequence, 87 residues long: Large ribosomal subunit protein bL27 (87 aa).

This sequence belongs to the bacterial ribosomal protein bL27 family.

This chain is Large ribosomal subunit protein bL27, found in Dichelobacter nodosus (strain VCS1703A).